Here is a 189-residue protein sequence, read N- to C-terminus: Dual-action ribosomal maturation protein DarP (189 aa).

Residues Met1 to Arg22 form a disordered region.

This sequence belongs to the DarP family.

The protein resides in the cytoplasm. Member of a network of 50S ribosomal subunit biogenesis factors which assembles along the 30S-50S interface, preventing incorrect 23S rRNA structures from forming. Promotes peptidyl transferase center (PTC) maturation. The protein is Dual-action ribosomal maturation protein DarP of Xylella fastidiosa (strain Temecula1 / ATCC 700964).